A 264-amino-acid polypeptide reads, in one-letter code: NAD-capped RNA hydrolase NudC (264 aa).

Zn(2+) is bound by residues C99 and C102. A substrate-binding site is contributed by E112. Residues C117 and C120 each coordinate Zn(2+). Substrate is bound at residue Y125. The 128-residue stretch at 126–253 (PVICPSIIVA…TIARKLIHAT (128 aa)) folds into the Nudix hydrolase domain. A162, E178, and E182 together coordinate a divalent metal cation. The short motif at 163-184 (GFVEVGETFEQAVQREVFEETG) is the Nudix box element. A substrate-binding site is contributed by 196–203 (QPWAFPNS). E223 contacts a divalent metal cation. Position 246 (A246) interacts with substrate.

The protein belongs to the Nudix hydrolase family. NudC subfamily. In terms of assembly, homodimer. Mg(2+) serves as cofactor. It depends on Mn(2+) as a cofactor. Requires Zn(2+) as cofactor.

It carries out the reaction a 5'-end NAD(+)-phospho-ribonucleoside in mRNA + H2O = a 5'-end phospho-adenosine-phospho-ribonucleoside in mRNA + beta-nicotinamide D-ribonucleotide + 2 H(+). The catalysed reaction is NAD(+) + H2O = beta-nicotinamide D-ribonucleotide + AMP + 2 H(+). The enzyme catalyses NADH + H2O = reduced beta-nicotinamide D-ribonucleotide + AMP + 2 H(+). Functionally, mRNA decapping enzyme that specifically removes the nicotinamide adenine dinucleotide (NAD) cap from a subset of mRNAs by hydrolyzing the diphosphate linkage to produce nicotinamide mononucleotide (NMN) and 5' monophosphate mRNA. The NAD-cap is present at the 5'-end of some mRNAs and stabilizes RNA against 5'-processing. Has preference for mRNAs with a 5'-end purine. Catalyzes the hydrolysis of a broad range of dinucleotide pyrophosphates. In Haemophilus influenzae (strain PittGG), this protein is NAD-capped RNA hydrolase NudC.